We begin with the raw amino-acid sequence, 303 residues long: Hydroxyacylglutathione hydrolase, mitochondrial (303 aa).

Positions 97, 99, 101, 102, 153, and 177 each coordinate Zn(2+). Substrate is bound by residues Lys-186–Phe-188, His-216–Tyr-218, and Arg-292–Lys-295. His-216 contributes to the Zn(2+) binding site.

The protein belongs to the metallo-beta-lactamase superfamily. Glyoxalase II family. In terms of assembly, monomer. Zn(2+) is required as a cofactor.

The protein localises to the mitochondrion matrix. It localises to the cytoplasm. The enzyme catalyses an S-(2-hydroxyacyl)glutathione + H2O = a 2-hydroxy carboxylate + glutathione + H(+). It catalyses the reaction (R)-S-lactoylglutathione + H2O = (R)-lactate + glutathione + H(+). Functionally, thiolesterase that catalyzes the hydrolysis of S-D-lactoyl-glutathione to form glutathione and D-lactic acid. The polypeptide is Hydroxyacylglutathione hydrolase, mitochondrial (hagh) (Danio rerio (Zebrafish)).